A 178-amino-acid polypeptide reads, in one-letter code: Redox-sensing transcriptional repressor Rex (178 aa).

Residue 59–64 (GVGNMG) coordinates NAD(+).

The protein belongs to the transcriptional regulatory Rex family. As to quaternary structure, homodimer.

Its subcellular location is the cytoplasm. Its function is as follows. Modulates transcription in response to changes in cellular NADH/NAD(+) redox state. The sequence is that of Redox-sensing transcriptional repressor Rex from Streptococcus suis.